Here is a 456-residue protein sequence, read N- to C-terminus: MADGGSERADGRIVKMEVDYSATVDQRLPECEKLAKEGRLQEVIETLLSLEKQTRTASDMVSTSRILVAIVKMCYEAKEWDLLNENIMLLSKRRSQLKQAVAKMVQQCCTYVEEITDLPIKLRLIDTLRMVTEGKIYVEIERARLTKTLATIKEQNGDVKEAASILQELQVETYGSMEKKERVEFILEQMRLCLAVKDYIRTQIISKKINTKFFQEENTEKLKLKYYNLMIQLDQHEGSYLSICKHYRAIYDTPCIQAESEKWQQALKSVVLYVILAPFDNEQSDLVHRISGDKKLEEIPKYKDLLKLFTTMELMRWSTLVEDYGMELRKGSLESPATDVFGYTEEGEKRWKDLKNRVVEHNIRIMAKYYTRITMKRMAQLLDLSVDESEAFLSNLVVNKTIFAKVDRLAGIINFQRPKDPNNLLNDWSQKLNSLMSLVNKTTHLIAKEEMIHNLQ.

A2 bears the N-acetylalanine mark. Residue K92 forms a Glycyl lysine isopeptide (Lys-Gly) (interchain with G-Cter in SUMO1); alternate linkage. Residue K92 forms a Glycyl lysine isopeptide (Lys-Gly) (interchain with G-Cter in SUMO2); alternate linkage. K221 and K368 each carry N6-acetyllysine. The 179-residue stretch at 242-420 (SICKHYRAIY…GIINFQRPKD (179 aa)) folds into the PCI domain.

This sequence belongs to the proteasome subunit p55 family. Component of the 19S proteasome regulatory particle complex. The 26S proteasome consists of a 20S core particle (CP) and two 19S regulatory subunits (RP). The regulatory particle is made of a lid composed of 9 subunits including PSMD12, a base containing 6 ATPases and few additional components. Interacts with ERCC6.

Component of the 26S proteasome, a multiprotein complex involved in the ATP-dependent degradation of ubiquitinated proteins. This complex plays a key role in the maintenance of protein homeostasis by removing misfolded or damaged proteins, which could impair cellular functions, and by removing proteins whose functions are no longer required. Therefore, the proteasome participates in numerous cellular processes, including cell cycle progression, apoptosis, or DNA damage repair. The sequence is that of 26S proteasome non-ATPase regulatory subunit 12 (PSMD12) from Bos taurus (Bovine).